The following is a 256-amino-acid chain: Floral homeotic protein APETALA 1 (256 aa).

Residues 1-61 form the MADS-box domain; it reads MGRGRVQLKR…GKLFEYSTDS (61 aa). One can recognise a K-box domain in the interval 88–178; the sequence is NTNWSMEYNR…SKQIKEREKI (91 aa). Positions 88–185 form a coiled coil; it reads NTNWSMEYNR…EKILRAQQEQ (98 aa).

As to quaternary structure, homodimer capable of binding to CArG-box sequences. Heterodimer with SEP3, AP1 and SVP. Binds AP3/PI to form a ternary complex. Interacts with the SEU-LUG corepressor complex when complexed to AGL24 or SVP. Interacts with AGL15 and AGL16. Interacts with TT16/AGL32. As to expression, expressed in young flower primordia, later becomes localized to sepals and petals.

It is found in the nucleus. In terms of biological role, transcription factor that promotes early floral meristem identity in synergy with LEAFY. Is required subsequently for the transition of an inflorescence meristem into a floral meristem. Is indispensable for normal development of sepals and petals in flowers. Positively regulates the B class homeotic proteins APETALA3 and PISTILLATA with the cooperation of LEAFY and UFO. Interacts with SEPALLATA3 or AP3/PI heterodimer to form complexes that could be involved in genes regulation during floral meristem development. Positively regulates AGAMOUS in cooperation with LEAFY. Displays a redundant function with CAULIFLOWER in the up-regulation of LEAFY. Together with AGL24 and SVP, controls the identity of the floral meristem and regulates expression of class B, C and E genes. Represses flowering time genes AGL24, SVP and SOC1 in emerging floral meristems. This is Floral homeotic protein APETALA 1 (AP1) from Arabidopsis thaliana (Mouse-ear cress).